Reading from the N-terminus, the 42-residue chain is Serine/threonine-protein phosphatase 5 (42 aa).

The interval 38–42 (QLGVM) is required for autoinhibition.

It belongs to the PPP phosphatase family. PP-5 (PP-T) subfamily. Probably forms a complex composed of chaperones HSP90 and HSP70, co-chaperones STIP1/HOP, CDC37, PPP5C, PTGES3/p23, TSC1 and client protein TSC2. Probably forms a complex composed of chaperones HSP90 and HSP70, co-chaperones CDC37, PPP5C, TSC1 and client protein TSC2, CDK4, AKT, RAF1 and NR3C1; this complex does not contain co-chaperones STIP1/HOP and PTGES3/p23. Part of a complex with HSP90/HSP90AA1 and steroid receptors. Interacts (via TPR repeats) with HSP90AA1 (via TPR repeat-binding motif) or HSPA1A/HSPA1B; the interaction is direct and activates the phosphatase activity. Dissociates from HSPA1A/HSPA1B and HSP90AA1 in response to arachidonic acid. Interacts with CPNE1 (via VWFA domain). Interacts with CDC16, CDC27. Interacts with KLHDC10 (via the 6 Kelch repeats); inhibits the phosphatase activity on MAP3K5. Interacts with ATM and ATR; both interactions are induced by DNA damage and enhance ATM and ATR kinase activity. Interacts with RAD17; reduced by DNA damage. Interacts with nuclear receptors such as NR3C1/GCR and PPARG (activated by agonist); regulates their transactivation activities. Interacts (via TPR repeats) with S100 proteins S100A1, S100A2, S100A6, S100B and S100P; the interactions are calcium-dependent, strongly activate PPP5C phosphatase activity and compete with HSP90AA1 and MAP3K5 interactions. Interacts with SMAD2 and SMAD3 but not with SMAD1; decreases SMAD3 phosphorylation and protein levels. Interacts (via TPR repeats) with CRY1 and CRY2; the interaction with CRY2 down-regulates the phosphatase activity on CSNK1E. Interacts (via TPR repeats) with the active form of RAC1, GNA12 or GNA13; these interactions activate the phosphatase activity and translocate PPP5C to the cell membrane. Interacts with FLCN. Mg(2+) serves as cofactor. Requires Mn(2+) as cofactor. In terms of processing, activated by at least two different proteolytic cleavages producing a 56 kDa and a 50 kDa form.

It localises to the nucleus. The protein localises to the cytoplasm. Its subcellular location is the cell membrane. The catalysed reaction is O-phospho-L-seryl-[protein] + H2O = L-seryl-[protein] + phosphate. It carries out the reaction O-phospho-L-threonyl-[protein] + H2O = L-threonyl-[protein] + phosphate. With respect to regulation, autoinhibited. In the autoinhibited state, the TPR domain interacts with the catalytic region and prevents substrate access to the catalytic pocket. Allosterically activated by various polyunsaturated fatty acids, free long-chain fatty-acids and long-chain fatty acyl-CoA esters, arachidonic acid being the most effective activator. HSP90A and probably RAC1, GNA12 and GNA13 can also release the autoinhibition by the TPR repeat. Activation by RAC1, GNA12 and GNA13 is synergistic with the one produced by fatty acids binding. Inhibited by okadaic acid. Its function is as follows. Serine/threonine-protein phosphatase that dephosphorylates a myriad of proteins involved in different signaling pathways including the kinases CSNK1E, ASK1/MAP3K5, PRKDC and RAF1, the nuclear receptors NR3C1, PPARG, ESR1 and ESR2, SMAD proteins and TAU/MAPT. Implicated in wide ranging cellular processes, including apoptosis, differentiation, DNA damage response, cell survival, regulation of ion channels or circadian rhythms, in response to steroid and thyroid hormones, calcium, fatty acids, TGF-beta as well as oxidative and genotoxic stresses. Participates in the control of DNA damage response mechanisms such as checkpoint activation and DNA damage repair through, for instance, the regulation ATM/ATR-signaling and dephosphorylation of PRKDC and TP53BP1. Inhibits ASK1/MAP3K5-mediated apoptosis induced by oxidative stress. Plays a positive role in adipogenesis, mainly through the dephosphorylation and activation of PPARG transactivation function. Also dephosphorylates and inhibits the anti-adipogenic effect of NR3C1. Regulates the circadian rhythms, through the dephosphorylation and activation of CSNK1E. May modulate TGF-beta signaling pathway by the regulation of SMAD3 phosphorylation and protein expression levels. Dephosphorylates and may play a role in the regulation of TAU/MAPT. Through their dephosphorylation, may play a role in the regulation of ions channels such as KCNH2. Dephosphorylate FNIP1, disrupting interaction with HSP90AA1/Hsp90. This is Serine/threonine-protein phosphatase 5 (PPP5C) from Oryctolagus cuniculus (Rabbit).